A 310-amino-acid chain; its full sequence is Ribosomal RNA small subunit methyltransferase H (310 aa).

S-adenosyl-L-methionine contacts are provided by residues 32 to 34 (AGH), Asp-52, Phe-79, Asp-100, and Gln-107.

Belongs to the methyltransferase superfamily. RsmH family.

It is found in the cytoplasm. The enzyme catalyses cytidine(1402) in 16S rRNA + S-adenosyl-L-methionine = N(4)-methylcytidine(1402) in 16S rRNA + S-adenosyl-L-homocysteine + H(+). Functionally, specifically methylates the N4 position of cytidine in position 1402 (C1402) of 16S rRNA. This Bacillus pumilus (strain SAFR-032) protein is Ribosomal RNA small subunit methyltransferase H.